The following is a 368-amino-acid chain: Alanine racemase (368 aa).

Lys-40 serves as the catalytic Proton acceptor; specific for D-alanine. Lys-40 carries the post-translational modification N6-(pyridoxal phosphate)lysine. Arg-134 provides a ligand contact to substrate. Tyr-263 serves as the catalytic Proton acceptor; specific for L-alanine. Position 310 (Met-310) interacts with substrate.

The protein belongs to the alanine racemase family. The cofactor is pyridoxal 5'-phosphate.

The catalysed reaction is L-alanine = D-alanine. It participates in amino-acid biosynthesis; D-alanine biosynthesis; D-alanine from L-alanine: step 1/1. Its function is as follows. Catalyzes the interconversion of L-alanine and D-alanine. May also act on other amino acids. The sequence is that of Alanine racemase (alr) from Listeria monocytogenes serotype 1/2a (strain 10403S).